Consider the following 743-residue polypeptide: Phosphoribosylformylglycinamidine synthase subunit PurL (743 aa).

His50 is a catalytic residue. ATP contacts are provided by Tyr53 and Lys92. Residue Glu94 coordinates Mg(2+). Substrate is bound by residues 95–98 (SHNH) and Arg117. Catalysis depends on His96, which acts as the Proton acceptor. Asp118 serves as a coordination point for Mg(2+). Gln241 is a substrate binding site. Asp269 is a binding site for Mg(2+). 313 to 315 (ESQ) contacts substrate. ATP is bound by residues Asp495 and Gly532. Asn533 contacts Mg(2+). Ser535 serves as a coordination point for substrate.

It belongs to the FGAMS family. As to quaternary structure, monomer. Part of the FGAM synthase complex composed of 1 PurL, 1 PurQ and 2 PurS subunits.

The protein resides in the cytoplasm. It catalyses the reaction N(2)-formyl-N(1)-(5-phospho-beta-D-ribosyl)glycinamide + L-glutamine + ATP + H2O = 2-formamido-N(1)-(5-O-phospho-beta-D-ribosyl)acetamidine + L-glutamate + ADP + phosphate + H(+). Its pathway is purine metabolism; IMP biosynthesis via de novo pathway; 5-amino-1-(5-phospho-D-ribosyl)imidazole from N(2)-formyl-N(1)-(5-phospho-D-ribosyl)glycinamide: step 1/2. Functionally, part of the phosphoribosylformylglycinamidine synthase complex involved in the purines biosynthetic pathway. Catalyzes the ATP-dependent conversion of formylglycinamide ribonucleotide (FGAR) and glutamine to yield formylglycinamidine ribonucleotide (FGAM) and glutamate. The FGAM synthase complex is composed of three subunits. PurQ produces an ammonia molecule by converting glutamine to glutamate. PurL transfers the ammonia molecule to FGAR to form FGAM in an ATP-dependent manner. PurS interacts with PurQ and PurL and is thought to assist in the transfer of the ammonia molecule from PurQ to PurL. The sequence is that of Phosphoribosylformylglycinamidine synthase subunit PurL from Rhizobium etli (strain CIAT 652).